The primary structure comprises 309 residues: tRNA pseudouridine synthase B (309 aa).

D39 (nucleophile) is an active-site residue. Positions 229–306 (LPRVVVHQES…ERVLTLRKVF (78 aa)) constitute a PUA domain.

It belongs to the pseudouridine synthase TruB family. Type 1 subfamily.

It carries out the reaction uridine(55) in tRNA = pseudouridine(55) in tRNA. Responsible for synthesis of pseudouridine from uracil-55 in the psi GC loop of transfer RNAs. This Thermotoga maritima (strain ATCC 43589 / DSM 3109 / JCM 10099 / NBRC 100826 / MSB8) protein is tRNA pseudouridine synthase B.